The sequence spans 39 residues: SGSKTAKIGDGCFGVRIDRIGSTSGMGCGGVPKPTPGGS.

Positions 1–8 are excised as a propeptide; that stretch reads SGSKTAKI. C12 and C28 form a disulfide bridge.

This sequence belongs to the natriuretic peptide family. Expressed by the venom gland.

It localises to the secreted. Snake venom natriuretic peptide that targets both NPR1 and NPR2. Exhibits hypotensive and vasodepressor activities. This is Natriuretic peptide CnNP-a from Cryptophis nigrescens (Eastern small-eyed snake).